A 261-amino-acid polypeptide reads, in one-letter code: Cell division protein B (261 aa).

Residues 213 to 261 (SEDMILNYIKTTGGFIDVDYIAKNFDVSKDEVFNVLRRLEEKGLIVLEG) form a winged-helix-like fold region.

Interacts with CdvA. Interacts with CdvC.

It localises to the cytoplasm. It is found in the nucleoid. Its function is as follows. Part of a cell division machinery. The CdvA, CdvB and CdvC proteins polymerize between segregating nucleoids and persist throughout cell division, forming a successively smaller structure during constriction. The chain is Cell division protein B from Sulfolobus acidocaldarius (strain ATCC 33909 / DSM 639 / JCM 8929 / NBRC 15157 / NCIMB 11770).